We begin with the raw amino-acid sequence, 414 residues long: MLMLRRTAGAIPKPPKSKVYGFLRRFSVHPRTLSCHKLVLGIETSCDDTGAAVVDETGNVLGEALHSQTQVHLKTGGIVPPVAQQLHRENIQRIVEETLSACRITPSDLSAIATTIKPGLALSLGVGLSFSLQLVNQFKKPFIPIHHMEAHALTIRLTNKVEFPFLVLLISGGHCLLALVQGVSDFLLLGKSLDIAPGDMLDKVARRLSLIKHPECSTMSGGKAIEQLAKDGNRFHFTINPPMQNAKNCDFSFTGLQHITDKLITHKEKEEGIEKGQILSSAADIAAAVQHATACHLAKRTHRAILFCKQKNLLSPANAVLVVSGGVASNLYIRKALEIVANATQCTLLCPPPRLCTDNGIMIAWNGIERLRAGLGVLHDVEDIRYEPKCPLGVDISREVAEAAIKVPRLKMAL.

The N-terminal 29 residues, 1-29, are a transit peptide targeting the mitochondrion; the sequence is MLMLRRTAGAIPKPPKSKVYGFLRRFSVH. N6-acetyllysine is present on residues lysine 74 and lysine 140. Residues histidine 147 and histidine 151 each coordinate a divalent metal cation. Residues 169 to 173 and aspartate 202 contribute to the substrate site; that span reads LISGG. Residue lysine 203 is modified to N6-acetyllysine. 2 residues coordinate substrate: glycine 222 and glutamate 226. 2 positions are modified to N6-acetyllysine: lysine 230 and lysine 299. Residues 329–330 and threonine 357 contribute to the substrate site; that span reads SN. Aspartate 358 provides a ligand contact to a divalent metal cation.

The protein belongs to the KAE1 / TsaD family. As to quaternary structure, monomer. The cofactor is a divalent metal cation.

The protein localises to the mitochondrion. It carries out the reaction L-threonylcarbamoyladenylate + adenosine(37) in tRNA = N(6)-L-threonylcarbamoyladenosine(37) in tRNA + AMP + H(+). Required for the formation of a threonylcarbamoyl group on adenosine at position 37 (t(6)A37) in mitochondrial tRNAs that read codons beginning with adenine. Probably involved in the transfer of the threonylcarbamoyl moiety of threonylcarbamoyl-AMP (TC-AMP) to the N6 group of A37. Involved in mitochondrial genome maintenance. The sequence is that of tRNA N6-adenosine threonylcarbamoyltransferase, mitochondrial from Mus musculus (Mouse).